The following is a 410-amino-acid chain: uncharacterized protein (410 aa).

Residue 11-39 coordinates NAD(+); it reads VLVIGGGPSGTALSAELAARGLDVQQLAP.

The protein belongs to the lycopene cyclase family.

This is an uncharacterized protein from Deinococcus radiodurans (strain ATCC 13939 / DSM 20539 / JCM 16871 / CCUG 27074 / LMG 4051 / NBRC 15346 / NCIMB 9279 / VKM B-1422 / R1).